Reading from the N-terminus, the 407-residue chain is NADH dehydrogenase [ubiquinone] 1 alpha subcomplex subunit 10, mitochondrial (407 aa).

The N-terminal 60 residues, 1 to 60 (MTAVFRVGLVRLVSRATQSPNLLQAQTNALPAAFQQRCSISGKTMRGGPRVPKAAPYPYK), are a transit peptide targeting the mitochondrion.

This sequence belongs to the complex I NDUFA10 subunit family. As to quaternary structure, complex I is composed of 45 different subunits. This a component of the hydrophobic protein fraction. Forms a complex including sicily, ND-42 and Hsp83; the complex is necessary to chaperone ND-42 in the cytoplasm before mitochondrial import; the interaction between sicily and ND-42 is direct and occurs preferably between the unprocessed forms in the cytoplasm. FAD is required as a cofactor. Expressed in muscles (at protein level).

It localises to the mitochondrion matrix. Its subcellular location is the cytoplasm. In terms of biological role, accessory subunit of the mitochondrial membrane respiratory chain NADH dehydrogenase (Complex I), that is believed not to be involved in catalysis. Complex I functions in the transfer of electrons from NADH to the respiratory chain. The immediate electron acceptor for the enzyme is believed to be ubiquinone. The protein is NADH dehydrogenase [ubiquinone] 1 alpha subcomplex subunit 10, mitochondrial of Drosophila melanogaster (Fruit fly).